The following is a 63-amino-acid chain: Beta-defensin 35 (63 aa).

A signal peptide spans 1–23 (MPQTFFVFCFLFFVFLQLFPGTG). Cystine bridges form between C31–C58, C38–C52, and C42–C59.

Belongs to the beta-defensin family. As to expression, expressed in testis, epididymis (caput, corpus and cauda), kidney and neonatal and adult brain.

The protein resides in the secreted. Functionally, has antibacterial activity. The chain is Beta-defensin 35 (Defb35) from Mus musculus (Mouse).